The primary structure comprises 118 residues: uncharacterized protein (118 aa).

Residues 25–85 form a disordered region; sequence AEQPGSGGIA…SSSSTPSRAR (61 aa). Residues 71–83 are compositionally biased toward low complexity; that stretch reads RPSASSSSSTPSR.

This is an uncharacterized protein from Azospirillum brasilense.